Consider the following 216-residue polypeptide: Cytochrome c biogenesis ATP-binding export protein CcmA (216 aa).

In terms of domain architecture, ABC transporter spans 5 to 216 (ISVDTLLSAS…RKIRLDYRFV (212 aa)). 43-50 (GPNGAGKT) is an ATP binding site.

Belongs to the ABC transporter superfamily. CcmA exporter (TC 3.A.1.107) family. The complex is composed of two ATP-binding proteins (CcmA) and two transmembrane proteins (CcmB).

It is found in the cell inner membrane. The catalysed reaction is heme b(in) + ATP + H2O = heme b(out) + ADP + phosphate + H(+). Its function is as follows. Part of the ABC transporter complex CcmAB involved in the biogenesis of c-type cytochromes; once thought to export heme, this seems not to be the case, but its exact role is uncertain. Responsible for energy coupling to the transport system. The chain is Cytochrome c biogenesis ATP-binding export protein CcmA from Shewanella oneidensis (strain ATCC 700550 / JCM 31522 / CIP 106686 / LMG 19005 / NCIMB 14063 / MR-1).